The following is a 263-amino-acid chain: uncharacterized protein (263 aa).

Residues 1 to 22 (MGYLKRLVLYIVIMVMSVFIIG) form the signal peptide. Residue C23 is the site of N-palmitoyl cysteine attachment. Residue C23 is the site of S-diacylglycerol cysteine attachment.

Belongs to the staphylococcal tandem lipoprotein family.

Its subcellular location is the cell membrane. This is an uncharacterized protein from Staphylococcus aureus (strain N315).